The chain runs to 331 residues: Probable cyclic nucleotide synthase IK1_05630 (331 aa).

It belongs to the CD-NTase family. D12 subfamily.

In terms of biological role, cyclic nucleotide synthase (second messenger synthase) of a CBASS antivirus system. CBASS (cyclic oligonucleotide-based antiphage signaling system) provides immunity against bacteriophage. The CD-NTase protein synthesizes cyclic nucleotides in response to infection; these serve as specific second messenger signals. The signals activate a diverse range of effectors, leading to bacterial cell death and thus abortive phage infection. A type I-B CBASS system. Functionally, probably a cyclic nucleotide synthase that makes second messenger nucleotide which activates a CBASS antiviral defense system. Protects B.subtilis against phage infection. When IK1_05630 and IK1_05631 are introduced in B.subtilis BEST7003 there is 1000-fold protection against phage SBSphiC. Both genes are required for protection. Activation leads to bacterial cell lysis and death, which occurs before the phage has finished its replication cycle, thus protecting non-infected bacteria by aborting the phage infection and preventing its propagation. This chain is Probable cyclic nucleotide synthase IK1_05630, found in Bacillus cereus (strain VD146).